Reading from the N-terminus, the 541-residue chain is Glucose-6-phosphate isomerase (541 aa).

The active-site Proton donor is the glutamate 346. Residues histidine 377 and lysine 506 contribute to the active site.

The protein belongs to the GPI family.

Its subcellular location is the cytoplasm. It catalyses the reaction alpha-D-glucose 6-phosphate = beta-D-fructose 6-phosphate. The protein operates within carbohydrate biosynthesis; gluconeogenesis. It functions in the pathway carbohydrate degradation; glycolysis; D-glyceraldehyde 3-phosphate and glycerone phosphate from D-glucose: step 2/4. Catalyzes the reversible isomerization of glucose-6-phosphate to fructose-6-phosphate. In Rhizobium etli (strain ATCC 51251 / DSM 11541 / JCM 21823 / NBRC 15573 / CFN 42), this protein is Glucose-6-phosphate isomerase.